We begin with the raw amino-acid sequence, 41 residues long: Large ribosomal subunit protein bL36A (41 aa).

This sequence belongs to the bacterial ribosomal protein bL36 family.

The protein is Large ribosomal subunit protein bL36A of Aeromonas salmonicida (strain A449).